Here is a 386-residue protein sequence, read N- to C-terminus: MTNTTDGDLLLKNITAQAPFPICFADLEKAVAEKIPAGPFGYIRSGAGGEQTLRNNRSAFEKYSIVPRFLNDVSNVHTSINLFGKTYPTPLLFAPVGMNGMVHEEGELAAVRAAQQLNMPYIQSTVSTYALEDVAEAAPSATKWFQLYWSTNEEIAFSMAARAESAGFEAIVLTVDTVMLGWREEDVRNQFSPLKLGYAKGNYINDPVFMASLPNDSFESYVQGVLQNVFHPTLNWEHVRELKRRTNLPILLKGILHPEDAKLAIVNGVDGIIVSNHGGRQLDGVIGSLDALPSIVSAVKGQIPIILDSGVYRGMDALKALALGADAVAIGRPFIYGLALEGQQGVERVMTNIYDELKVSIALAGTTSIEGLRTITLVKNDGMEVK.

Positions 16–382 (AQAPFPICFA…RTITLVKNDG (367 aa)) constitute an FMN hydroxy acid dehydrogenase domain. Tyr-42 provides a ligand contact to pyruvate. Residues 95 to 97 (PVG), Ser-124, and Gln-146 contribute to the FMN site. Pyruvate is bound at residue Tyr-148. Thr-174 contacts FMN. Residue Arg-183 coordinates pyruvate. FMN-binding residues include Lys-253 and Ser-275. His-277 and Arg-280 together coordinate pyruvate. The active-site Proton acceptor is the His-277. Residues 308–312 (DSGVY) and Arg-332 each bind FMN.

Belongs to the FMN-dependent alpha-hydroxy acid dehydrogenase family. As to quaternary structure, homotetramer. The cofactor is FMN.

It carries out the reaction a (2S)-2-hydroxycarboxylate + O2 = a 2-oxocarboxylate + H2O2. It catalyses the reaction (S)-lactate + O2 = pyruvate + H2O2. The enzyme catalyses 2-hydroxyoctanoate + O2 = 2-oxooctanoate + H2O2. The catalysed reaction is mandelate + O2 = phenylglyoxylate + H2O2. It carries out the reaction 2-hydroxyoctadecanoate + O2 = 2-oxooctadecanoate + H2O2. It catalyses the reaction (S)-2-hydroxyglutarate + O2 = H2O2 + 2-oxoglutarate. Functionally, oxidase that catalyzes the oxidation of a broad range of 2-hydroxyacids in vitro, such as (S)-lactate, 2-hydroxyoctanoate, mandelate, 2-hydroxyoctadecanoate and (S)-2-hydroxyglutarate, to the corresponding 2-oxoacids, with a reduction of O2 to H2O2. May be involved in the utilization of L-lactate as an energy source for growth. This Lysinibacillus sphaericus (strain C3-41) protein is L-lactate oxidase.